The primary structure comprises 435 residues: Enolase (435 aa).

Positions 155 and 164 each coordinate substrate. The active-site Proton donor is E205. Mg(2+) contacts are provided by D243, E292, and D319. Substrate-binding positions include E292, D319, K344, 371 to 374 (SHRS), and K395. K344 serves as the catalytic Proton acceptor.

Belongs to the enolase family. In terms of assembly, homooctamer. It depends on Mg(2+) as a cofactor.

Its subcellular location is the cytoplasm. The protein resides in the secreted. The protein localises to the cell surface. The catalysed reaction is (2R)-2-phosphoglycerate = phosphoenolpyruvate + H2O. It participates in carbohydrate degradation; glycolysis; pyruvate from D-glyceraldehyde 3-phosphate: step 4/5. In terms of biological role, catalyzes the reversible conversion of 2-phosphoglycerate (2-PG) into phosphoenolpyruvate (PEP). It is essential for the degradation of carbohydrates via glycolysis. 'Moonlights' as a plasminogen receptor and plasmin activator. Binds host (human) plasminogen in vitro; enhances the activity of host tissue-specific plasminogen activator (tPA). In Streptococcus pyogenes serotype M1, this protein is Enolase.